We begin with the raw amino-acid sequence, 522 residues long: Cytochrome P450 monooxygenase AKT7 (522 aa).

The chain crosses the membrane as a helical span at residues 10–30 (LYVTCTVLAALILGYIQAMII). C452 provides a ligand contact to heme.

Belongs to the cytochrome P450 family. Heme is required as a cofactor.

It is found in the membrane. Its pathway is mycotoxin biosynthesis. In terms of biological role, cytochrome P450 monooxygenase; part of the gene clusters that mediate the biosynthesis of the host-selective toxins (HSTs) AK-toxins responsible for Japanese pear black spot disease by the Japanese pear pathotype. AK-toxins are esters of 9,10-epoxy 8-hydroxy 9-methyldecatrienoic acid (EDA). On cellular level, AK-toxins affect plasma membrane of susceptible cells and cause a sudden increase in loss of K(+) after a few minutes of toxin treatment. The acyl-CoA ligase AKT1, the hydrolase AKT2 and enoyl-CoA hydratase AKT3 are all involved in the biosynthesis of the AK-, AF- and ACT-toxin common 9,10-epoxy-8-hydroxy-9-methyl-decatrienoic acid (EDA) structural moiety. Part of the EDA biosynthesis occurs in the peroxisome since these 3 enzymes are localized in peroxisomes. The exact roles of the 3 enzymes, as well as of additional AK-toxin clusters enzymes, including AKT4, AKT6 and AKTS1, have still to be elucidated. The Cytochrome P450 monooxygenase AKT7 on the other side functions to limit production of EDA and AK-toxin, probably via the catalysis of a side reaction of EDA or its precursor. The polypeptide is Cytochrome P450 monooxygenase AKT7 (Alternaria alternata (Alternaria rot fungus)).